A 428-amino-acid polypeptide reads, in one-letter code: Ribulose bisphosphate carboxylase (428 aa).

The active-site Proton acceptor is lysine 151. A substrate-binding site is contributed by lysine 153. Mg(2+)-binding residues include lysine 177, aspartate 179, and glutamate 180. At lysine 177 the chain carries N6-carboxylysine. Histidine 270 functions as the Proton acceptor in the catalytic mechanism. Substrate-binding positions include arginine 271, histidine 303, 354–356 (SGG), and 376–379 (QFGG).

This sequence belongs to the RuBisCO large chain family. Type III subfamily. As to quaternary structure, homodimer or homodecamer. In contrast to form I RuBisCO, the form III RuBisCO is composed solely of large subunits. The cofactor is Mg(2+).

It carries out the reaction 2 (2R)-3-phosphoglycerate + 2 H(+) = D-ribulose 1,5-bisphosphate + CO2 + H2O. The enzyme catalyses D-ribulose 1,5-bisphosphate + O2 = 2-phosphoglycolate + (2R)-3-phosphoglycerate + 2 H(+). Functionally, catalyzes the addition of molecular CO(2) and H(2)O to ribulose 1,5-bisphosphate (RuBP), generating two molecules of 3-phosphoglycerate (3-PGA). Functions in an archaeal AMP degradation pathway, together with AMP phosphorylase and R15P isomerase. The polypeptide is Ribulose bisphosphate carboxylase (Methanosarcina mazei (strain ATCC BAA-159 / DSM 3647 / Goe1 / Go1 / JCM 11833 / OCM 88) (Methanosarcina frisia)).